Here is a 227-residue protein sequence, read N- to C-terminus: MFDFIIDFETMGSGEKAAVIDLAVIAFDPNPEVVETFDELVSRGIKIKFDLKSQKGHRLFTKSTIEWWKNQSPEARKNIAPSDEDVSTIDGIAKFNDYINAHNIDPWKSQGWCRGMSFDFPILVDLIRDIQRLNGVSENELDTFKLEPCKFWNQRDIRTRIEALLLVRDMTTCPLPKGTLDGFVAHDSIHDCAKDILMMKYALRYAMGLEDAPSEEECDPLSLPTKR.

The catalysed reaction is Exonucleolytic cleavage in the 3'- to 5'-direction to yield nucleoside 5'-phosphates.. 3'-5' exonuclease that preferentially uses ssDNA as substrate. Plays a role in group I intron homing. May play a role in the final step of host DNA degradation, by scavenging DNA into mononucleotides. The chain is Exodeoxyribonuclease (dexA) from Escherichia coli (Bacteriophage T4).